The chain runs to 366 residues: Chorismate synthase (366 aa).

2 residues coordinate NADP(+): Arg-48 and Arg-54. Residues Arg-132–Ser-134, Asn-244–Ala-245, Gly-289, Lys-304–Ser-308, and Arg-330 each bind FMN.

This sequence belongs to the chorismate synthase family. As to quaternary structure, homotetramer. The cofactor is FMNH2.

The catalysed reaction is 5-O-(1-carboxyvinyl)-3-phosphoshikimate = chorismate + phosphate. It functions in the pathway metabolic intermediate biosynthesis; chorismate biosynthesis; chorismate from D-erythrose 4-phosphate and phosphoenolpyruvate: step 7/7. Its function is as follows. Catalyzes the anti-1,4-elimination of the C-3 phosphate and the C-6 proR hydrogen from 5-enolpyruvylshikimate-3-phosphate (EPSP) to yield chorismate, which is the branch point compound that serves as the starting substrate for the three terminal pathways of aromatic amino acid biosynthesis. This reaction introduces a second double bond into the aromatic ring system. This chain is Chorismate synthase, found in Methylorubrum populi (strain ATCC BAA-705 / NCIMB 13946 / BJ001) (Methylobacterium populi).